A 165-amino-acid chain; its full sequence is Deoxyuridine 5'-triphosphate nucleotidohydrolase (165 aa).

Substrate contacts are provided by residues 66 to 68 (RSG), asparagine 79, 83 to 85 (TVD), and lysine 93. The tract at residues 134-165 (ETSRGAGGHGSSGGHASLTPGARSAARVAQEG) is disordered.

Belongs to the dUTPase family. Mg(2+) is required as a cofactor.

The catalysed reaction is dUTP + H2O = dUMP + diphosphate + H(+). It participates in pyrimidine metabolism; dUMP biosynthesis; dUMP from dCTP (dUTP route): step 2/2. Functionally, this enzyme is involved in nucleotide metabolism: it produces dUMP, the immediate precursor of thymidine nucleotides and it decreases the intracellular concentration of dUTP so that uracil cannot be incorporated into DNA. The protein is Deoxyuridine 5'-triphosphate nucleotidohydrolase of Nocardia farcinica (strain IFM 10152).